A 256-amino-acid polypeptide reads, in one-letter code: Imidazole glycerol phosphate synthase subunit HisF (256 aa).

Active-site residues include D12 and D131.

Belongs to the HisA/HisF family. Heterodimer of HisH and HisF.

It is found in the cytoplasm. The enzyme catalyses 5-[(5-phospho-1-deoxy-D-ribulos-1-ylimino)methylamino]-1-(5-phospho-beta-D-ribosyl)imidazole-4-carboxamide + L-glutamine = D-erythro-1-(imidazol-4-yl)glycerol 3-phosphate + 5-amino-1-(5-phospho-beta-D-ribosyl)imidazole-4-carboxamide + L-glutamate + H(+). It participates in amino-acid biosynthesis; L-histidine biosynthesis; L-histidine from 5-phospho-alpha-D-ribose 1-diphosphate: step 5/9. IGPS catalyzes the conversion of PRFAR and glutamine to IGP, AICAR and glutamate. The HisF subunit catalyzes the cyclization activity that produces IGP and AICAR from PRFAR using the ammonia provided by the HisH subunit. The chain is Imidazole glycerol phosphate synthase subunit HisF from Thermobifida fusca (strain YX).